Reading from the N-terminus, the 426-residue chain is D-tagatose-1,6-bisphosphate aldolase subunit KbaZ (426 aa).

The protein belongs to the GatZ/KbaZ family. KbaZ subfamily. Forms a complex with KbaY.

The protein operates within carbohydrate metabolism; D-tagatose 6-phosphate degradation; D-glyceraldehyde 3-phosphate and glycerone phosphate from D-tagatose 6-phosphate: step 2/2. Functionally, component of the tagatose-1,6-bisphosphate aldolase KbaYZ that is required for full activity and stability of the Y subunit. Could have a chaperone-like function for the proper and stable folding of KbaY. When expressed alone, KbaZ does not show any aldolase activity. In Escherichia coli O139:H28 (strain E24377A / ETEC), this protein is D-tagatose-1,6-bisphosphate aldolase subunit KbaZ.